A 447-amino-acid chain; its full sequence is Methylenetetrahydrofolate--tRNA-(uracil-5-)-methyltransferase TrmFO (447 aa).

10–15 (GAGLAG) is a binding site for FAD.

This sequence belongs to the MnmG family. TrmFO subfamily. The cofactor is FAD.

The protein localises to the cytoplasm. It carries out the reaction uridine(54) in tRNA + (6R)-5,10-methylene-5,6,7,8-tetrahydrofolate + NADH + H(+) = 5-methyluridine(54) in tRNA + (6S)-5,6,7,8-tetrahydrofolate + NAD(+). The catalysed reaction is uridine(54) in tRNA + (6R)-5,10-methylene-5,6,7,8-tetrahydrofolate + NADPH + H(+) = 5-methyluridine(54) in tRNA + (6S)-5,6,7,8-tetrahydrofolate + NADP(+). Functionally, catalyzes the folate-dependent formation of 5-methyl-uridine at position 54 (M-5-U54) in all tRNAs. This is Methylenetetrahydrofolate--tRNA-(uracil-5-)-methyltransferase TrmFO from Symbiobacterium thermophilum (strain DSM 24528 / JCM 14929 / IAM 14863 / T).